The chain runs to 345 residues: S-adenosylmethionine:tRNA ribosyltransferase-isomerase (345 aa).

This sequence belongs to the QueA family. As to quaternary structure, monomer.

It is found in the cytoplasm. It carries out the reaction 7-aminomethyl-7-carbaguanosine(34) in tRNA + S-adenosyl-L-methionine = epoxyqueuosine(34) in tRNA + adenine + L-methionine + 2 H(+). Its pathway is tRNA modification; tRNA-queuosine biosynthesis. Transfers and isomerizes the ribose moiety from AdoMet to the 7-aminomethyl group of 7-deazaguanine (preQ1-tRNA) to give epoxyqueuosine (oQ-tRNA). The protein is S-adenosylmethionine:tRNA ribosyltransferase-isomerase of Helicobacter pylori (strain ATCC 700392 / 26695) (Campylobacter pylori).